The chain runs to 370 residues: GTPase Obg (370 aa).

An Obg domain is found at 1–159 (MKFIDEARIE…RMLRLELKVL (159 aa)). The segment at 127-146 (NLHFKSSTNRAPRQKTDGKP) is disordered. Residues 160–334 (ADVGLLGMPN…LCYAIYDYLA (175 aa)) form the OBG-type G domain. GTP is bound by residues 166–173 (GMPNAGKS), 191–195 (FTTLA), 213–216 (DIPG), 284–287 (NKLD), and 315–317 (SAL). Residues Ser-173 and Thr-193 each coordinate Mg(2+).

The protein belongs to the TRAFAC class OBG-HflX-like GTPase superfamily. OBG GTPase family. In terms of assembly, monomer. Mg(2+) serves as cofactor.

Its subcellular location is the cytoplasm. In terms of biological role, an essential GTPase which binds GTP, GDP and possibly (p)ppGpp with moderate affinity, with high nucleotide exchange rates and a fairly low GTP hydrolysis rate. Plays a role in control of the cell cycle, stress response, ribosome biogenesis and in those bacteria that undergo differentiation, in morphogenesis control. In Burkholderia lata (strain ATCC 17760 / DSM 23089 / LMG 22485 / NCIMB 9086 / R18194 / 383), this protein is GTPase Obg.